A 390-amino-acid chain; its full sequence is Digeranylgeranylglycerophospholipid reductase (390 aa).

Residues alanine 18, glutamate 37, cysteine 48, alanine 49, alanine 51, arginine 98, valine 122, aspartate 278, glycine 290, and isoleucine 291 each contribute to the FAD site. Position 368 (valine 368) interacts with a 2,3-bis-O-(geranylgeranyl)-sn-glycerol 1-phospholipid.

The protein belongs to the geranylgeranyl reductase family. DGGGPL reductase subfamily. It depends on FAD as a cofactor.

It catalyses the reaction a 2,3-bis-O-phytanyl-sn-glycerol 1-phospholipid + 8 A = a 2,3-bis-O-(geranylgeranyl)-sn-glycerol 1-phospholipid + 8 AH2. The enzyme catalyses 2,3-bis-O-(phytanyl)-sn-glycerol 1-phosphate + 8 A = 2,3-bis-O-(geranylgeranyl)-sn-glycerol 1-phosphate + 8 AH2. The catalysed reaction is CDP-2,3-bis-O-(geranylgeranyl)-sn-glycerol + 8 AH2 = CDP-2,3-bis-O-(phytanyl)-sn-glycerol + 8 A. It carries out the reaction archaetidylserine + 8 AH2 = 2,3-bis-O-phytanyl-sn-glycero-3-phospho-L-serine + 8 A. It participates in membrane lipid metabolism; glycerophospholipid metabolism. Is involved in the reduction of 2,3-digeranylgeranylglycerophospholipids (unsaturated archaeols) into 2,3-diphytanylglycerophospholipids (saturated archaeols) in the biosynthesis of archaeal membrane lipids. Catalyzes the formation of archaetidic acid (2,3-di-O-phytanyl-sn-glyceryl phosphate) from 2,3-di-O-geranylgeranylglyceryl phosphate (DGGGP) via the hydrogenation of each double bond of the isoprenoid chains. Is also probably able to reduce double bonds of geranyl groups in CDP-2,3-bis-O-(geranylgeranyl)-sn-glycerol and archaetidylserine, thus acting at various stages in the biosynthesis of archaeal membrane lipids. The protein is Digeranylgeranylglycerophospholipid reductase of Methanococcus maripaludis (strain C7 / ATCC BAA-1331).